We begin with the raw amino-acid sequence, 361 residues long: Palmitoyltransferase ZDHHC16 (361 aa).

Topologically, residues 1 to 77 (MRGQRSLLLG…VYWLVDNVIR (77 aa)) are cytoplasmic. Residues 78–98 (WFGVVFVVLVIVLTGSIVAIA) traverse the membrane as a helical segment. The Lumenal portion of the chain corresponds to 99-116 (YLCVLPLILRTYSVPRLC). A helical transmembrane segment spans residues 117 to 137 (WHFFYSHWNLILIVFHYYQAI). Residues 138–198 (TTPPGYPPQG…NNCVGHYNHR (61 aa)) are Cytoplasmic-facing. The DHHC domain occupies 155–205 (SICKKCIYPKPARTHHCSICNRCVLKMDHHCPWLNNCVGHYNHRYFFSFCF). The active-site S-palmitoyl cysteine intermediate is the Cys185. Residues 199–219 (YFFSFCFFMTLGCVYCSYGSW) form a helical membrane-spanning segment. At 220–250 (DLFREAYAAIETYHQTPPPTFSFRERITHKS) the chain is on the lumenal side. Residues 251–271 (LVYLWFLCSSVALALGALTMW) traverse the membrane as a helical segment. Residues 272–361 (HAVLISRGET…TAHSASVMAV (90 aa)) lie on the Cytoplasmic side of the membrane.

The protein belongs to the DHHC palmitoyltransferase family. In terms of assembly, interacts with ABL1. Interacts with COPS5. Ubiquitously expressed.

Its subcellular location is the endoplasmic reticulum membrane. The catalysed reaction is L-cysteinyl-[protein] + hexadecanoyl-CoA = S-hexadecanoyl-L-cysteinyl-[protein] + CoA. Its function is as follows. Palmitoyl acyltransferase that mediates palmitoylation of proteins such as PLN and ZDHHC6. Required during embryonic heart development and cardiac function, possibly by mediating palmitoylation of PLN, thereby affecting PLN phosphorylation and homooligomerization. Also required for eye development. Palmitoylates ZDHHC6, affecting the quaternary assembly of ZDHHC6, its localization, stability and function. May play a role in DNA damage response. May be involved in apoptosis regulation. Involved in the proliferation of neural stem cells by regulating the FGF/ERK pathway. This Mus musculus (Mouse) protein is Palmitoyltransferase ZDHHC16.